We begin with the raw amino-acid sequence, 562 residues long: Probable ganciclovir kinase (562 aa).

The segment covering M1–I16 has biased composition (polar residues). The disordered stretch occupies residues M1 to G32. ATP is bound by residues L201 to V209 and K218. The active-site Proton acceptor is the D313.

It belongs to the protein kinase superfamily. Tyr protein kinase family. HCMV ganciclovir subfamily.

Its function is as follows. Phosphorylates the antiviral nucleoside analog ganciclovir. The chain is Probable ganciclovir kinase (U69) from Homo sapiens (Human).